A 274-amino-acid chain; its full sequence is Remorin 4.2 (274 aa).

Over residues 1-30 (MLTLYHQERSPDATSNDRDETPETVVREVH) the composition is skewed to basic and acidic residues. Disordered regions lie at residues 1 to 71 (MLTL…EGEN), 117 to 157 (TDHE…TVQR), and 218 to 245 (AMEK…AKRG). Composition is skewed to polar residues over residues 61–71 (RSATTMSEGEN) and 145–156 (GPGQSRVGSTVQ). A coiled-coil region spans residues 204–239 (MKKIERKLEERKAKAMEKTQNNVAKAQRKAEERRAT). The segment covering 231–245 (RKAEERRATAEAKRG) has biased composition (basic and acidic residues).

The protein belongs to the remorin family. As to quaternary structure, forms homodimer and heterodimer with REM4.1. Interacts with KIN11. In terms of processing, probably ubiquitinated and degraded by the 26S proteasome pathway. In terms of tissue distribution, predominantly detected in bud, stem, root, flower, silique, and leaves, and enhanced dramatically in senescence leaf.

Its subcellular location is the cell membrane. Collaborates with REM4.1 to positively regulate the BCTV and BSCTV susceptibility. The polypeptide is Remorin 4.2 (Arabidopsis thaliana (Mouse-ear cress)).